A 267-amino-acid polypeptide reads, in one-letter code: Alpha carbonic anhydrase 4 (267 aa).

Positions 1 to 26 (MDTNAKTIFFMAMCFIYLSFPNISHA) are cleaved as a signal peptide. The N-linked (GlcNAc...) asparagine glycan is linked to asparagine 22. Positions 34–264 (TPFTYEQKTE…SKGRSVWFYD (231 aa)) constitute an Alpha-carbonic anhydrase domain. Cysteine 59 and cysteine 214 are disulfide-bonded. Histidine 99 serves as the catalytic Proton acceptor. Zn(2+) is bound by residues histidine 125 and histidine 127. Asparagine 135 carries an N-linked (GlcNAc...) asparagine glycan. Residue histidine 144 coordinates Zn(2+). 210–211 (TV) serves as a coordination point for substrate.

The protein belongs to the alpha-class carbonic anhydrase family. Zn(2+) is required as a cofactor. N-glycosylated.

Its subcellular location is the plastid. The protein localises to the chloroplast stroma. The catalysed reaction is hydrogencarbonate + H(+) = CO2 + H2O. Reversible hydration of carbon dioxide. This chain is Alpha carbonic anhydrase 4 (ACA4), found in Arabidopsis thaliana (Mouse-ear cress).